Consider the following 296-residue polypeptide: Urease accessory protein UreD (296 aa).

The protein belongs to the UreD family. UreD, UreF and UreG form a complex that acts as a GTP-hydrolysis-dependent molecular chaperone, activating the urease apoprotein by helping to assemble the nickel containing metallocenter of UreC. The UreE protein probably delivers the nickel.

It localises to the cytoplasm. Functionally, required for maturation of urease via the functional incorporation of the urease nickel metallocenter. The sequence is that of Urease accessory protein UreD from Synechococcus sp. (strain CC9311).